The sequence spans 152 residues: Acidic phospholipase A2 S16-19 (152 aa).

A signal peptide spans 1 to 19 (MYPAHLLVLLAVCVSLLGA). The propeptide occupies 20 to 27 (SNIPLPSL). Cystine bridges form between Cys-38–Cys-104, Cys-54–Cys-151, Cys-71–Cys-132, Cys-78–Cys-125, Cys-88–Cys-118, and Cys-111–Cys-123. Ca(2+) is bound by residues Tyr-55, Gly-57, and Gly-59. His-75 is an active-site residue. Asp-76 is a binding site for Ca(2+). Asp-126 is a catalytic residue.

Belongs to the phospholipase A2 family. Group I subfamily. D49 sub-subfamily. The cofactor is Ca(2+). In terms of processing, this enzyme lacks one of the seven disulfide bonds found in similar PLA2 proteins. Expressed by the venom gland.

It localises to the secreted. The enzyme catalyses a 1,2-diacyl-sn-glycero-3-phosphocholine + H2O = a 1-acyl-sn-glycero-3-phosphocholine + a fatty acid + H(+). Snake venom phospholipase A2 (PLA2) that inhibits collagen-induced platelet aggregation. PLA2 catalyzes the calcium-dependent hydrolysis of the 2-acyl groups in 3-sn-phosphoglycerides. This chain is Acidic phospholipase A2 S16-19, found in Austrelaps superbus (Lowland copperhead snake).